The following is a 511-amino-acid chain: Pancreatic alpha-amylase (511 aa).

The first 15 residues, 1–15 (MKFFLLLFTIGFCWA), serve as a signal peptide directing secretion. At Gln16 the chain carries Pyrrolidone carboxylic acid. 3 disulfide bridges follow: Cys43–Cys101, Cys85–Cys130, and Cys156–Cys175. Residues Asn115, Arg173, and Asp182 each coordinate Ca(2+). Arg210 contacts chloride. Catalysis depends on Asp212, which acts as the Nucleophile. Ca(2+) is bound at residue His216. Glu248 acts as the Proton donor in catalysis. Chloride contacts are provided by Asn313 and Arg352. Cystine bridges form between Cys393-Cys399 and Cys465-Cys477. An N-linked (GlcNAc...) asparagine glycan is attached at Asn476.

It belongs to the glycosyl hydrolase 13 family. Monomer. Binds to the sea anemone inhibitor helianthamide. It depends on Ca(2+) as a cofactor. Chloride serves as cofactor. In terms of tissue distribution, detected in pancreas (at protein level).

The protein localises to the secreted. Its subcellular location is the extracellular space. The enzyme catalyses Endohydrolysis of (1-&gt;4)-alpha-D-glucosidic linkages in polysaccharides containing three or more (1-&gt;4)-alpha-linked D-glucose units.. This chain is Pancreatic alpha-amylase (AMY2A), found in Homo sapiens (Human).